A 124-amino-acid polypeptide reads, in one-letter code: Ribonuclease pancreatic (124 aa).

The segment covering 1 to 13 has biased composition (basic and acidic residues); it reads KESAAAKFERQHM. The interval 1-23 is disordered; it reads KESAAAKFERQHMDPSASSISSS. Lys7 and Arg10 together coordinate substrate. Catalysis depends on His12, which acts as the Proton acceptor. Cystine bridges form between Cys26–Cys84, Cys40–Cys95, Cys58–Cys110, and Cys65–Cys72. Asn34 carries N-linked (GlcNAc...) asparagine glycosylation. Residues 41–45, Lys66, and Arg85 contribute to the substrate site; that span reads KPVNT. His119 (proton donor) is an active-site residue.

The protein belongs to the pancreatic ribonuclease family. In terms of assembly, monomer. Interacts with and forms tight 1:1 complexes with RNH1. Dimerization of two such complexes may occur. Interaction with RNH1 inhibits this protein. In terms of tissue distribution, pancreas.

The protein localises to the secreted. The catalysed reaction is an [RNA] containing cytidine + H2O = an [RNA]-3'-cytidine-3'-phosphate + a 5'-hydroxy-ribonucleotide-3'-[RNA].. It catalyses the reaction an [RNA] containing uridine + H2O = an [RNA]-3'-uridine-3'-phosphate + a 5'-hydroxy-ribonucleotide-3'-[RNA].. Endonuclease that catalyzes the cleavage of RNA on the 3' side of pyrimidine nucleotides. Acts on single-stranded and double-stranded RNA. This Alces alces alces (European moose) protein is Ribonuclease pancreatic (RNASE1).